Here is an 823-residue protein sequence, read N- to C-terminus: Leucine--tRNA ligase (823 aa).

Residues 42-52 (PYPSGTLHMGH) carry the 'HIGH' region motif. The short motif at 575–579 (KMSKS) is the 'KMSKS' region element. Residue lysine 578 coordinates ATP.

The protein belongs to the class-I aminoacyl-tRNA synthetase family.

The protein resides in the cytoplasm. It catalyses the reaction tRNA(Leu) + L-leucine + ATP = L-leucyl-tRNA(Leu) + AMP + diphosphate. This is Leucine--tRNA ligase from Legionella pneumophila subsp. pneumophila (strain Philadelphia 1 / ATCC 33152 / DSM 7513).